We begin with the raw amino-acid sequence, 242 residues long: Uridylate kinase (242 aa).

Position 13 to 16 (13 to 16 (KLSG)) interacts with ATP. Gly-55 serves as a coordination point for UMP. Residues Gly-56 and Arg-60 each coordinate ATP. Residues Asp-75 and 136 to 143 (TGNPFFTT) contribute to the UMP site. Residues Thr-163, Tyr-169, and Asp-172 each contribute to the ATP site.

It belongs to the UMP kinase family. As to quaternary structure, homohexamer.

The protein localises to the cytoplasm. It carries out the reaction UMP + ATP = UDP + ADP. It functions in the pathway pyrimidine metabolism; CTP biosynthesis via de novo pathway; UDP from UMP (UMPK route): step 1/1. With respect to regulation, inhibited by UTP. Functionally, catalyzes the reversible phosphorylation of UMP to UDP. The polypeptide is Uridylate kinase (Zymomonas mobilis subsp. mobilis (strain ATCC 31821 / ZM4 / CP4)).